Here is a 246-residue protein sequence, read N- to C-terminus: Hsp70 nucleotide exchange factor fes-1 (246 aa).

The segment covering 23–40 (QSYHSNGAPTPNNNSGPA) has biased composition (polar residues). The interval 23 to 63 (QSYHSNGAPTPNNNSGPATGTGAVATSPAPQVTGSGPRPVD) is disordered. ARM repeat units lie at residues 48–92 (TSPA…DPSP), 113–152 (LDNANLLEELSLWSPLISLLDHEDEDMRYHAAWCLGTAVQ), 155–196 (QKTQ…SAVR), and 214–244 (HEVLVNNGTKVDAADMDKVDEVIDVLRNKAK).

This sequence belongs to the FES1 family.

Its subcellular location is the cytoplasm. In terms of biological role, functions as a nucleotide exchange factor (NEF) for Hsp70 chaperones which accelerates the release of ADP. Required for fully efficient Hsp70-mediated folding of proteins. This chain is Hsp70 nucleotide exchange factor fes-1 (fes-1), found in Neurospora crassa (strain ATCC 24698 / 74-OR23-1A / CBS 708.71 / DSM 1257 / FGSC 987).